We begin with the raw amino-acid sequence, 166 residues long: MSNEVKKNEELIEKLVSVKRHSKTVKGGRIMSFAALTVVGDGKGRIGVGRGKSREVPAAIQKAMENAKKNMVSVNLNNDTLWYPVVSNHGASKVFMQPASAGTGIIAGGAMRSVFEAVGVHNVLAKTYGSTNPANVVRATIAGLAKIKSPDEIAEKRGLSVEEIQG.

In terms of domain architecture, S5 DRBM spans 11–74 (LIEKLVSVKR…ENAKKNMVSV (64 aa)).

Belongs to the universal ribosomal protein uS5 family. In terms of assembly, part of the 30S ribosomal subunit. Contacts proteins S4 and S8.

Its function is as follows. With S4 and S12 plays an important role in translational accuracy. Located at the back of the 30S subunit body where it stabilizes the conformation of the head with respect to the body. This is Small ribosomal subunit protein uS5 from Francisella tularensis subsp. holarctica (strain LVS).